Consider the following 168-residue polypeptide: Photosystem I assembly protein Ycf3 (168 aa).

3 TPR repeats span residues 35-68 (AFTY…EIDP), 72-105 (SYIL…NPFL), and 120-153 (GEQA…TPGN).

Belongs to the Ycf3 family.

The protein resides in the plastid. Its subcellular location is the chloroplast thylakoid membrane. Its function is as follows. Essential for the assembly of the photosystem I (PSI) complex. May act as a chaperone-like factor to guide the assembly of the PSI subunits. The sequence is that of Photosystem I assembly protein Ycf3 from Calycanthus floridus var. glaucus (Eastern sweetshrub).